The primary structure comprises 302 residues: Ribosomal RNA small subunit methyltransferase A (302 aa).

S-adenosyl-L-methionine is bound by residues histidine 15, leucine 17, glycine 42, glutamate 64, aspartate 89, and asparagine 109. Residues 275–302 (DAASADGHDHGDGSGQGESSPGGARDQI) form a disordered region.

It belongs to the class I-like SAM-binding methyltransferase superfamily. rRNA adenine N(6)-methyltransferase family. RsmA subfamily.

The protein resides in the cytoplasm. The catalysed reaction is adenosine(1518)/adenosine(1519) in 16S rRNA + 4 S-adenosyl-L-methionine = N(6)-dimethyladenosine(1518)/N(6)-dimethyladenosine(1519) in 16S rRNA + 4 S-adenosyl-L-homocysteine + 4 H(+). Functionally, specifically dimethylates two adjacent adenosines (A1518 and A1519) in the loop of a conserved hairpin near the 3'-end of 16S rRNA in the 30S particle. May play a critical role in biogenesis of 30S subunits. The sequence is that of Ribosomal RNA small subunit methyltransferase A from Parasynechococcus marenigrum (strain WH8102).